We begin with the raw amino-acid sequence, 63 residues long: Small ribosomal subunit protein bS21 (63 aa).

The protein belongs to the bacterial ribosomal protein bS21 family.

In Bacteroides fragilis (strain ATCC 25285 / DSM 2151 / CCUG 4856 / JCM 11019 / LMG 10263 / NCTC 9343 / Onslow / VPI 2553 / EN-2), this protein is Small ribosomal subunit protein bS21.